The sequence spans 1056 residues: PAX-interacting protein 1 (1056 aa).

2 consecutive BRCT domains span residues 8–93 and 94–183; these read VPEE…GFSP and ESCQ…FYHP. The interval 94-183 is interaction with PAGR1; sequence ESCQIFFGLT…RRKDEAFYHP (90 aa). Residues 188–205 are compositionally biased toward acidic residues; sequence YEEEEEEEEEGDNEEQDS. Disordered regions lie at residues 188–276, 393–412, and 419–486; these read YEEE…QRRL, THVL…HPAL, and MQLQ…FQQQ. Residues 214–223 are compositionally biased toward low complexity; that stretch reads SSVASSAVAS. S223 and S230 each carry phosphoserine. Composition is skewed to low complexity over residues 396-412, 419-435, and 445-486; these read LQQH…HPAL, MQLQ…QQQP, and QFPQ…FQQQ. The segment at 577-1056 is interaction with TP53BP1; that stretch reads QLFGHDPAVE…TLDYESYKFN (480 aa). 4 BRCT domains span residues 588-681, 688-776, 853-934, and 955-989; these read PEES…RALH, PGGK…VQYS, TPLV…NYIL, and HVSP…GGKV. The short motif at 655 to 672 is the Nuclear localization signal element; sequence RKRCVTAHWLNTVLKKKK.

As to quaternary structure, interacts with the C-terminal transactivation domain of PAX2. Forms a constitutive complex with PAGR1 independently of the MLL2/MLL3 complex. Interacts with TP53BP1 (when phosphorylated at the N-terminus by ATM). Interacts with HLTF. Component of the KMT2 family MLL2/MLL3 complex (also named ASCOM complex), at least composed of the HMTs KMT2D and/or KMT2C, the common subunits ASH2L, RBBP5, WDR5 and DPY30, and the complex type-specific subunits PAXIP1/PTIP, PAGR1, NCOA6 and KDM6A; required for the association of PAGR1 with the MLL2/MLL3 complex. Interacts with NUPR1; this interaction prevents PAXIP1 inhibition of PAX2 transcription factor activity. As to expression, expression detected in all tissues examined, including brain stem, cerebellum, cortex, heart, spleen, kidney, liver, thymus and lung.

It localises to the nucleus matrix. The protein resides in the chromosome. Functionally, involved in DNA damage response and in transcriptional regulation through histone methyltransferase (HMT) complexes such as the MLL2/MLL3 complex. Plays a role in early development. In DNA damage response is required for cell survival after ionizing radiation. In vitro shown to be involved in the homologous recombination mechanism for the repair of double-strand breaks (DSBs). Its localization to DNA damage foci requires Rnf8 and Ube2n. Recruits Tp53bp1 to DNA damage foci and, at least in particular repair processes, effective DNA damage response appears to require the association with Tp53bp1 phosphorylated by Atm. Together with Tp53bp1 regulates Atm association. Proposed to recruit Pagr1 to sites of DNA damage and the Pagr1:Paxip1 complex is required for cell survival in response to DNA damage independently of the MLL2/MLL3 complex. However, this function has been questioned. Promotes ubiquitination of PCNA following UV irradiation and may regulate recruitment of polymerase eta and Rad51 to chromatin after DNA damage. Proposed to be involved in transcriptional regulation by linking MLL-containing histone methyltransferase (HMT) complexes to gene promoters by interacting with promoter-bound transcription factors such as Pax2. Associates with gene promoters that are known to be regulated by Kmt2d/Mll2. During immunoglobulin class switching in activated B-cells is involved in trimethylation of histone H3 at 'Lys-4' and in transcription initiation of downstream switch regions at the immunoglobulin heavy-chain (Igh) locus; this function appears to involve the recruitment of MLL-containing HMT complexes. Conflictingly, its function in transcriptional regulation during immunoglobulin class switching is reported to be independent of the MLL2/MLL3 complex. This is PAX-interacting protein 1 (Paxip1) from Mus musculus (Mouse).